Reading from the N-terminus, the 120-residue chain is Large ribosomal subunit protein uL18 (120 aa).

Belongs to the universal ribosomal protein uL18 family. In terms of assembly, part of the 50S ribosomal subunit; part of the 5S rRNA/L5/L18/L25 subcomplex. Contacts the 5S and 23S rRNAs.

In terms of biological role, this is one of the proteins that bind and probably mediate the attachment of the 5S RNA into the large ribosomal subunit, where it forms part of the central protuberance. This chain is Large ribosomal subunit protein uL18, found in Brucella suis biovar 1 (strain 1330).